The primary structure comprises 641 residues: Kelch-like protein 22 (641 aa).

Residues Met1–Lys25 are disordered. The span at Pro10 to Ser24 shows a compositional bias: low complexity. The 68-residue stretch at Phe50 to Val117 folds into the BTB domain. 6 Kelch repeats span residues Cys299 to Asn349, Phe350 to Asp399, Phe400 to Gly446, Met448 to Glu493, Lys494 to Lys544, and Lys545 to Leu593.

Component of the BCR(KLHL22) E3 ubiquitin ligase complex, at least composed of cul3, klhl22 and rbx1.

It is found in the cytoplasm. Its subcellular location is the cytosol. It localises to the cytoskeleton. The protein resides in the microtubule organizing center. The protein localises to the centrosome. It is found in the spindle. Its subcellular location is the nucleus. It localises to the lysosome. It participates in protein modification; protein ubiquitination. Substrate-specific adapter of a BCR (BTB-CUL3-RBX1) E3 ubiquitin ligase complex. The BCR(KLHL22) ubiquitin ligase complex could mediate the monoubiquitination of PLK1 and regulate its activity in spindle assembly checkpoint (SAC) and chromosome segregation. The BCR(KLHL22) ubiquitin ligase complex may also be responsible for the ubiquitin-dependent proteasomal degradation of DEPDC5 and the activation of the TORC1 pathway. In Xenopus tropicalis (Western clawed frog), this protein is Kelch-like protein 22 (klhl22).